A 441-amino-acid chain; its full sequence is Glutamate-1-semialdehyde 2,1-aminomutase (441 aa).

An N6-(pyridoxal phosphate)lysine modification is found at lysine 279.

It belongs to the class-III pyridoxal-phosphate-dependent aminotransferase family. HemL subfamily. Homodimer. It depends on pyridoxal 5'-phosphate as a cofactor.

The protein localises to the cytoplasm. The catalysed reaction is (S)-4-amino-5-oxopentanoate = 5-aminolevulinate. Its pathway is porphyrin-containing compound metabolism; protoporphyrin-IX biosynthesis; 5-aminolevulinate from L-glutamyl-tRNA(Glu): step 2/2. The protein is Glutamate-1-semialdehyde 2,1-aminomutase of Leptospira borgpetersenii serovar Hardjo-bovis (strain JB197).